The chain runs to 66 residues: Putative alpha-neurotoxin RjAa13 (66 aa).

Positions 1-60 (KEGYPVDWGNCKYECMSDAYCKDLCVDRKAKSGYCYKLNWSCYCEGLPDDSPIKTNGHCR) constitute an LCN-type CS-alpha/beta domain. 4 disulfide bridges follow: Cys-11/Cys-59, Cys-15/Cys-35, Cys-21/Cys-42, and Cys-25/Cys-44.

This sequence belongs to the long (4 C-C) scorpion toxin superfamily. Sodium channel inhibitor family. Alpha subfamily. As to expression, expressed by the venom gland.

Its subcellular location is the secreted. Its function is as follows. Alpha toxins bind voltage-independently at site-3 of sodium channels (Nav) and inhibits the inactivation of the activated channels, thereby blocking neuronal transmission. The sequence is that of Putative alpha-neurotoxin RjAa13 from Rhopalurus junceus (Caribbean blue scorpion).